We begin with the raw amino-acid sequence, 547 residues long: MDPMELNNVSIEPDGDSCSGDSIQDSYTGMENSDKDAMNSQFANEDAESQKFLTNGFLGKKKLADYADEHHPGMTSFGMSSFNLSNAIMGSGILGLSYAMANTGIILFIIMLLTVAILSLYSVHLLLKTAKEGGSLIYEKLGEKAFGWPGKIGAFISITMQNIGAMSSYLFIIKYELPEVIRAFMGLEENTGEWYLNGNYLVLFVSVGIILPLSLLKNLGYLGYTSGFSLSCMVFFVSVVIYKKFQIPCPLPALDHNNGNLTFNNTLPIHMISLPNDSESSGVNFMMDYAHHNPAGLDEKQVAGPLHSNGVEYEAQGAEKCQPKYFVFNSRTAYAIPILAFAFVCHPEVLPIYSELKDRSRRKMQTVSNISISGMLVMYLLAALFGYLSFYGDVEDELLHAYSKVYTFDTALLMVRLAVLVAVTLTVPIVLFPIRTSVITLLFPRKPFSWLKHFGIAAIIIALNNILVILVPTIKYIFGFIGASSATMLIFILPAAFYLKLVKKEPLRSPQKIGALVFLVTGIIFMMGSMALIILDWIYNPPNPNHH.

The disordered stretch occupies residues 1-34; it reads MDPMELNNVSIEPDGDSCSGDSIQDSYTGMENSD. Topologically, residues 1 to 104 are extracellular; the sequence is MDPMELNNVS…GLSYAMANTG (104 aa). Positions 19–31 are enriched in polar residues; it reads SGDSIQDSYTGME. At Ser49 the chain carries Phosphoserine. Residues 105–125 traverse the membrane as a helical segment; sequence IILFIIMLLTVAILSLYSVHL. The Cytoplasmic portion of the chain corresponds to 126–151; the sequence is LLKTAKEGGSLIYEKLGEKAFGWPGK. The helical transmembrane segment at 152–172 threads the bilayer; it reads IGAFISITMQNIGAMSSYLFI. Residues 173–195 lie on the Extracellular side of the membrane; sequence IKYELPEVIRAFMGLEENTGEWY. Residues 196 to 216 traverse the membrane as a helical segment; it reads LNGNYLVLFVSVGIILPLSLL. The Cytoplasmic portion of the chain corresponds to 217 to 220; the sequence is KNLG. A helical membrane pass occupies residues 221–241; sequence YLGYTSGFSLSCMVFFVSVVI. Residues 242–332 are Extracellular-facing; sequence YKKFQIPCPL…PKYFVFNSRT (91 aa). Cys249 and Cys321 are disulfide-bonded. N-linked (GlcNAc...) asparagine glycans are attached at residues Asn260, Asn264, and Asn276. A helical transmembrane segment spans residues 333–353; sequence AYAIPILAFAFVCHPEVLPIY. Residues 354–369 lie on the Cytoplasmic side of the membrane; sequence SELKDRSRRKMQTVSN. A helical transmembrane segment spans residues 370–390; sequence ISISGMLVMYLLAALFGYLSF. Over 391-411 the chain is Extracellular; that stretch reads YGDVEDELLHAYSKVYTFDTA. Residues 412 to 432 traverse the membrane as a helical segment; sequence LLMVRLAVLVAVTLTVPIVLF. Residues 433–453 lie on the Cytoplasmic side of the membrane; it reads PIRTSVITLLFPRKPFSWLKH. A helical membrane pass occupies residues 454–474; it reads FGIAAIIIALNNILVILVPTI. Topologically, residues 475 to 476 are extracellular; it reads KY. A helical membrane pass occupies residues 477 to 497; sequence IFGFIGASSATMLIFILPAAF. The Cytoplasmic segment spans residues 498-514; the sequence is YLKLVKKEPLRSPQKIG. The helical transmembrane segment at 515–535 threads the bilayer; sequence ALVFLVTGIIFMMGSMALIIL. Residues 536-547 lie on the Extracellular side of the membrane; sequence DWIYNPPNPNHH.

This sequence belongs to the amino acid/polyamine transporter 2 family. In terms of processing, the disulfide bond plays an important role in substrate transport, but has no effect on trafficking to the cell surface. Detected in liver, in hepatocytes surrounding the central vein. Not detected in heart, kidney, brain, lung, small intestine, spleen and thymus. Highly expressed in placenta.

The protein resides in the cell membrane. It is found in the cell projection. The protein localises to the microvillus membrane. It catalyses the reaction L-alanine(in) + Na(+)(in) = L-alanine(out) + Na(+)(out). It carries out the reaction L-methionine(in) + Na(+)(in) = L-methionine(out) + Na(+)(out). The catalysed reaction is L-asparagine(in) + Na(+)(in) = L-asparagine(out) + Na(+)(out). The enzyme catalyses L-threonine(in) + Na(+)(in) = L-threonine(out) + Na(+)(out). It catalyses the reaction L-serine(in) + Na(+)(in) = L-serine(out) + Na(+)(out). It carries out the reaction glycine(in) + Na(+)(in) = glycine(out) + Na(+)(out). The catalysed reaction is L-glutamine(in) + Na(+)(in) = L-glutamine(out) + Na(+)(out). The enzyme catalyses L-histidine(in) + Na(+)(in) = L-histidine(out) + Na(+)(out). It catalyses the reaction L-cysteine(in) + Na(+)(in) = L-cysteine(out) + Na(+)(out). It carries out the reaction L-proline(in) + Na(+)(in) = L-proline(out) + Na(+)(out). In terms of biological role, symporter that cotransports neutral amino acids and sodium ions from the extraccellular to the intracellular side of the cell membrane. The transport is electrogenic, pH dependent and partially tolerates substitution of Na(+) by Li(+). Preferentially transports smaller amino acids, such as glycine, L-alanine, L-serine, L-asparagine and L-threonine, followed by L-cysteine, L-histidine, L-proline and L-glutamine and L-methionine. This Mus musculus (Mouse) protein is Sodium-coupled neutral amino acid transporter 4.